The sequence spans 276 residues: Sulfur carrier protein FdhD (276 aa).

The Cysteine persulfide intermediate role is filled by cysteine 122. 259-264 (FCRRGR) provides a ligand contact to Mo-bis(molybdopterin guanine dinucleotide).

Belongs to the FdhD family.

The protein resides in the cytoplasm. Functionally, required for formate dehydrogenase (FDH) activity. Acts as a sulfur carrier protein that transfers sulfur from IscS to the molybdenum cofactor prior to its insertion into FDH. The sequence is that of Sulfur carrier protein FdhD from Proteus mirabilis (strain HI4320).